Consider the following 974-residue polypeptide: Short transient receptor potential channel 5 (974 aa).

Residues 1 to 325 (MAQLYYKKVN…YDGFPGWRRK (325 aa)) are Cytoplasmic-facing. 4 ANK repeats span residues 30–60 (SAEE…IYYN), 69–97 (LGRS…VYVG), 98–124 (DALL…PSGE), and 141–170 (PDIT…TIPR). Zn(2+)-binding residues include histidine 172, cysteine 176, cysteine 178, and cysteine 181. The discontinuously helical intramembrane region spans 326–360 (HWVVKLLTCMTIGFLFPMLSIAYLISPRSNLGLFI). The Cytoplasmic portion of the chain corresponds to 361-363 (KKP). A helical transmembrane segment spans residues 364 to 384 (FIKFICHTASYLTFLFMLLLA). Residues 385 to 404 (SQHIVRTDLHVQGPPPTVVE) lie on the Extracellular side of the membrane. The chain crosses the membrane as a helical span at residues 405-419 (WMILPWVLGFIWGEI). Residues glutamate 418, glutamate 421, asparagine 436, and aspartate 439 each coordinate Ca(2+). At 420-433 (KEMWDGGFTEYIHD) the chain is on the cytoplasmic side. A helical transmembrane segment spans residues 434–454 (WWNLMDFAMNSLYLATISLKI). Residues 455–476 (VAYVKYNGSRPREEWEMWHPTL) lie on the Extracellular side of the membrane. Residue asparagine 461 is glycosylated (N-linked (GlcNAc...) asparagine). Residues 477–497 (IAEALFAISNILSSLRLISLF) form a helical membrane-spanning segment. Topologically, residues 498-512 (TANSHLGPLQISLGR) are cytoplasmic. The helical transmembrane segment at 513–535 (MLLDILKFLFIYCLVLLAFANGL) threads the bilayer. Over 536-603 (NQLYFYYETR…HEFTEFVGAT (68 aa)) the chain is Extracellular. Cysteine 553 and cysteine 558 are disulfide-bonded. The chain crosses the membrane as a helical span at residues 604–624 (MFGTYNVISLVVLLNMLIAMM). At 625–974 (NNSYQLIADH…GQEEQVTTRL (350 aa)) the chain is on the cytoplasmic side. Disordered stretches follow at residues 766–795 (QPRR…RAKS) and 811–838 (GPPL…KRSF). Positions 769-778 (RSLSTSSTEL) are enriched in low complexity. The tract at residues 972 to 974 (TRL) is essential for binding to NHERF1 PDZ domain.

Belongs to the transient receptor (TC 1.A.4) family. STrpC subfamily. TRPC5 sub-subfamily. In terms of assembly, homotetramer. Heterotetramer with TRPC1 and/or TRPC4. Each subunit in the homomeric ion channel (via ANK repeats) interacts with one copy of GTP-bound GNAI3; the interaction is direct and activates the ion channel. Interacts with TRPC4AP. Interacts with NHERF1. Interacts with MX1 and RNF24. Interacts (via C-terminus) with CABP1. Interacts with SESTD1 (via the spectrin 1 repeat). Interacts with PLSCR1. Interacts with PKD2L2. In terms of tissue distribution, expressed in brain.

Its subcellular location is the cell membrane. The catalysed reaction is Ca(2+)(in) = Ca(2+)(out). Its activity is regulated as follows. Activated by G-protein coupled receptors via direct interaction with GTP-bound GNAI3, which increases the channel sensitivity to phosphatidylinositol bisphosphate. May be activated by intracellular calcium store depletion. Calcium channel activity is enhanced by MYLK, that promotes its subcellular localization at the plasma membrane. In terms of biological role, forms a receptor-activated non-selective calcium permeant cation channel. Mediates calcium-dependent phosphatidylserine externalization and apoptosis in neurons via its association with PLSCR1. Acts on distinct neuronal populations in the hypothalamus to regulate innate behaviors including feeding, anxiety (flight/fight/fear), socialization and maternal care. This chain is Short transient receptor potential channel 5 (TRPC5), found in Oryctolagus cuniculus (Rabbit).